Consider the following 252-residue polypeptide: Acyl-coenzyme A diphosphatase FITM2 (252 aa).

Topologically, residues 1-25 (MAAAVAGSLVDKLVCLWRQPYTRIY) are cytoplasmic. Residues 26–46 (LPHLFFCISLVGSVLKNAELV) form a helical membrane-spanning segment. Residues 47–59 (PESYFSSSRNVLN) are Lumenal-facing. A helical transmembrane segment spans residues 60–80 (LYFVKVSWGWTIVLLLPFIAY). The Cytoplasmic portion of the chain corresponds to 81–94 (SNFYIKSHMFALRR). Residues 95–115 (LTSLLVATLVWYICTETFFYI) form a helical membrane-spanning segment. The Lumenal segment spans residues 116 to 156 (EDITGSCYESNTMVVIRGEFDTKAACRKAGFFWDGFDISGH). His156 is a catalytic residue. Residues 157–177 (SFILSYSSLVIMEEMVPMLHI) form a helical membrane-spanning segment. The Cytoplasmic portion of the chain corresponds to 178-190 (QPAYRNPPLDCLY). The helical transmembrane segment at 191–211 (LALNVIVAIWIWMFGCTSVYF) threads the bilayer. Residue His212 is part of the active site. Residues 212–223 (HDIIDKILGTSC) are Lumenal-facing. Residues 224-244 (GILGWYMTYKVWYVKLFSPGL) form a helical membrane-spanning segment. At 245–252 (PPQPKQHT) the chain is on the cytoplasmic side.

It belongs to the FIT family. FIT2 subfamily. As to expression, widely expressed.

Its subcellular location is the endoplasmic reticulum membrane. It catalyses the reaction an acyl-CoA + H2O = an acyl-4'-phosphopantetheine + adenosine 3',5'-bisphosphate + 2 H(+). In terms of biological role, fatty acyl-coenzyme A (CoA) diphosphatase that hydrolyzes fatty acyl-CoA to yield acyl-4'-phosphopantetheine and adenosine 3',5'-bisphosphate. Preferentially hydrolyzes unsaturated long-chain acyl-CoA substrates in the endoplasmic reticulum (ER) lumen. This catalytic activity is required for maintaining ER structure and for lipid droplets (LDs) biogenesis, which are lipid storage organelles involved in maintaining lipid and energy homeostasis. Required for lipid droplet accumulation in liver and intestine during embryogenesis. May directly bind to diacylglycerol (DAGs) and triacylglycerol, which is also important for LD biogenesis. May support directional budding of nacent LDs from the ER into the cytosol by reducing DAG levels at sites of LD formation. May play a role in the regulation of cell morphology, ER morphology and cytoskeletal organization. This is Acyl-coenzyme A diphosphatase FITM2 from Danio rerio (Zebrafish).